A 311-amino-acid polypeptide reads, in one-letter code: Putative F-box protein At3g28280 (311 aa).

The F-box domain maps to 1–43 (MNSLPEDLLAMILVKLPIKIFTTFKIVCTQWESMVDSPYFRDL).

This Arabidopsis thaliana (Mouse-ear cress) protein is Putative F-box protein At3g28280.